A 395-amino-acid polypeptide reads, in one-letter code: Elongation factor Tu (395 aa).

Residues lysine 10–glutamine 204 enclose the tr-type G domain. The interval glycine 19–threonine 26 is G1. Residue glycine 19–threonine 26 coordinates GTP. Threonine 26 is a Mg(2+) binding site. The interval glycine 61–serine 65 is G2. Residues aspartate 82–glycine 85 are G3. Residues aspartate 82 to histidine 86 and asparagine 137 to aspartate 140 contribute to the GTP site. The G4 stretch occupies residues asparagine 137–aspartate 140. The tract at residues serine 173 to leucine 175 is G5.

Belongs to the TRAFAC class translation factor GTPase superfamily. Classic translation factor GTPase family. EF-Tu/EF-1A subfamily. Monomer.

The protein localises to the cytoplasm. The enzyme catalyses GTP + H2O = GDP + phosphate + H(+). Functionally, GTP hydrolase that promotes the GTP-dependent binding of aminoacyl-tRNA to the A-site of ribosomes during protein biosynthesis. In Agathobacter rectalis (strain ATCC 33656 / DSM 3377 / JCM 17463 / KCTC 5835 / VPI 0990) (Eubacterium rectale), this protein is Elongation factor Tu.